Reading from the N-terminus, the 79-residue chain is Acyl carrier protein (79 aa).

The Carrier domain maps to 2 to 77 (ENIEQRVKKI…QAIDYVNAHL (76 aa)). S37 is modified (O-(pantetheine 4'-phosphoryl)serine).

It belongs to the acyl carrier protein (ACP) family. In terms of processing, 4'-phosphopantetheine is transferred from CoA to a specific serine of apo-ACP by AcpS. This modification is essential for activity because fatty acids are bound in thioester linkage to the sulfhydryl of the prosthetic group.

The protein resides in the cytoplasm. The protein operates within lipid metabolism; fatty acid biosynthesis. Carrier of the growing fatty acid chain in fatty acid biosynthesis. In Azoarcus sp. (strain BH72), this protein is Acyl carrier protein.